Reading from the N-terminus, the 445-residue chain is Na(+)-translocating NADH-quinone reductase subunit A (445 aa).

Belongs to the NqrA family. As to quaternary structure, composed of six subunits; NqrA, NqrB, NqrC, NqrD, NqrE and NqrF.

It catalyses the reaction a ubiquinone + n Na(+)(in) + NADH + H(+) = a ubiquinol + n Na(+)(out) + NAD(+). NQR complex catalyzes the reduction of ubiquinone-1 to ubiquinol by two successive reactions, coupled with the transport of Na(+) ions from the cytoplasm to the periplasm. NqrA to NqrE are probably involved in the second step, the conversion of ubisemiquinone to ubiquinol. In Marinomonas sp. (strain MWYL1), this protein is Na(+)-translocating NADH-quinone reductase subunit A.